The sequence spans 481 residues: MQWEVVIGLEIHTQLSTQSKIFSGSATTFGSEPNTQACLVDLGMPGVLPVLNKEAVRMAVKFGLAVDAEIGQHNVFARKNYFYPDLPKGYQISQMELPIVGKGHLDIPLEDGTVKRVGITRAHLEEDAGKSLHEDFQGMTGIDLNRAGTPLLEIVSEPDMRSAKEAVAYVKAIHAIVRYLGICDGNMAEGSLRCDCNVSIRPKGQVEFGTRCEIKNVNSFRFIEKAINSEIQRQIDLIEDGGKVIQQTRLYDPNTNETRAMRSKEEANDYRYFPDPDLLPVIIEDSFIEETRATLPELPPQKRERFQSQFGLSTYDASVLASSREQADYFEKVVSISGDAKLAANWVMVELGSLLNKQGVEIDQSPVSAEQLGGMLKRITDNTISGKIAKMVFEAMANGEGSADEVIEKRGLKQVTDSGAIESMLDEVLAANAEQVEQYRAADEAKRGKMFGFFVGQAMKASKGKANPQQVNELLKAKLEG.

The protein belongs to the GatB/GatE family. GatB subfamily. In terms of assembly, heterotrimer of A, B and C subunits.

It catalyses the reaction L-glutamyl-tRNA(Gln) + L-glutamine + ATP + H2O = L-glutaminyl-tRNA(Gln) + L-glutamate + ADP + phosphate + H(+). It carries out the reaction L-aspartyl-tRNA(Asn) + L-glutamine + ATP + H2O = L-asparaginyl-tRNA(Asn) + L-glutamate + ADP + phosphate + 2 H(+). Its function is as follows. Allows the formation of correctly charged Asn-tRNA(Asn) or Gln-tRNA(Gln) through the transamidation of misacylated Asp-tRNA(Asn) or Glu-tRNA(Gln) in organisms which lack either or both of asparaginyl-tRNA or glutaminyl-tRNA synthetases. The reaction takes place in the presence of glutamine and ATP through an activated phospho-Asp-tRNA(Asn) or phospho-Glu-tRNA(Gln). The chain is Aspartyl/glutamyl-tRNA(Asn/Gln) amidotransferase subunit B from Pseudomonas syringae pv. tomato (strain ATCC BAA-871 / DC3000).